Reading from the N-terminus, the 596-residue chain is NADH-quinone oxidoreductase subunit C/D (596 aa).

The NADH dehydrogenase I subunit C stretch occupies residues 1–186; it reads MTDLTAQDAA…DPFELTKAKQ (186 aa). Residues 210 to 596 form an NADH dehydrogenase I subunit D region; that stretch reads DFMFLNLGPN…IDFVMSDVDR (387 aa).

It in the N-terminal section; belongs to the complex I 30 kDa subunit family. This sequence in the C-terminal section; belongs to the complex I 49 kDa subunit family. NDH-1 is composed of 13 different subunits. Subunits NuoB, CD, E, F, and G constitute the peripheral sector of the complex.

Its subcellular location is the cell inner membrane. It catalyses the reaction a quinone + NADH + 5 H(+)(in) = a quinol + NAD(+) + 4 H(+)(out). In terms of biological role, NDH-1 shuttles electrons from NADH, via FMN and iron-sulfur (Fe-S) centers, to quinones in the respiratory chain. The immediate electron acceptor for the enzyme in this species is believed to be ubiquinone. Couples the redox reaction to proton translocation (for every two electrons transferred, four hydrogen ions are translocated across the cytoplasmic membrane), and thus conserves the redox energy in a proton gradient. The polypeptide is NADH-quinone oxidoreductase subunit C/D (Salmonella choleraesuis (strain SC-B67)).